We begin with the raw amino-acid sequence, 114 residues long: Propane 2-monooxygenase, effector component (114 aa).

The protein belongs to the TmoD/XamoD family. In terms of assembly, the propane 2-monooxygenase multicomponent enzyme system is composed of an electron transfer component and a monooxygenase component interacting with the effector protein MimD. The electron transfer component is composed of a reductase (MimB), and the monooxygenase component is formed by a large subunit (MimA) and a small subunit (MimC).

Functionally, effector component of the propane 2-monooxygenase multicomponent enzyme system which is involved in the degradation of propane via the O2-dependent hydroxylation of propane. The chain is Propane 2-monooxygenase, effector component from Mycolicibacterium smegmatis (strain ATCC 700084 / mc(2)155) (Mycobacterium smegmatis).